Here is a 279-residue protein sequence, read N- to C-terminus: Thymidylate synthase (279 aa).

133 to 134 lines the dUMP pocket; the sequence is RR. Cys154 (nucleophile) is an active-site residue. Residues 178–181, Asn189, and 219–221 each bind dUMP; these read RSND and HIY. A (6R)-5,10-methylene-5,6,7,8-tetrahydrofolate-binding site is contributed by Asp181. Ala278 serves as a coordination point for (6R)-5,10-methylene-5,6,7,8-tetrahydrofolate.

It belongs to the thymidylate synthase family. Bacterial-type ThyA subfamily. In terms of assembly, homodimer.

The protein localises to the cytoplasm. It catalyses the reaction dUMP + (6R)-5,10-methylene-5,6,7,8-tetrahydrofolate = 7,8-dihydrofolate + dTMP. The protein operates within pyrimidine metabolism; dTTP biosynthesis. Its function is as follows. Catalyzes the reductive methylation of 2'-deoxyuridine-5'-monophosphate (dUMP) to 2'-deoxythymidine-5'-monophosphate (dTMP) while utilizing 5,10-methylenetetrahydrofolate (mTHF) as the methyl donor and reductant in the reaction, yielding dihydrofolate (DHF) as a by-product. This enzymatic reaction provides an intracellular de novo source of dTMP, an essential precursor for DNA biosynthesis. This Streptococcus pneumoniae (strain ATCC 700669 / Spain 23F-1) protein is Thymidylate synthase.